Consider the following 299-residue polypeptide: Taste receptor type 2 member 50 (299 aa).

A topological domain (extracellular) is located at residue Met1. The helical transmembrane segment at 2–22 (ITFLYIFFSILIMVLFVLGNF) threads the bilayer. The Cytoplasmic segment spans residues 23 to 55 (ANGFIALVNFIDWVKRKKISSADQILTALAVSR). A helical membrane pass occupies residues 56–76 (IGLLWTLLLNWYLTVLNPAFY). Topologically, residues 77–87 (SVELRITSYNA) are extracellular. Residues 88 to 108 (WVVTNHFSMWLAASLSIFYLL) traverse the membrane as a helical segment. At 109–126 (KIANFSNLIFLHLKRRVR) the chain is on the cytoplasmic side. Residues 127-147 (SVILVILLGTLIFLVCHLLVA) form a helical membrane-spanning segment. The Extracellular portion of the chain corresponds to 148 to 181 (NMDESMWAEEYEGNITGKMKLRNTVHLSYLTVTT). Asn161 carries N-linked (GlcNAc...) asparagine glycosylation. The chain crosses the membrane as a helical span at residues 182 to 202 (LWSFIPFTLSLISFLMLICSL). Residues 203 to 229 (CKHLKKMQLHGEGSQDLSTKVHIKALQ) lie on the Cytoplasmic side of the membrane. The chain crosses the membrane as a helical span at residues 230 to 250 (TLISFLLLCAIFFLFLIISVW). Residues 251–259 (SPRRLRNDP) are Extracellular-facing. A helical transmembrane segment spans residues 260-280 (VVMVSKAVGNIYLAFDSFILI). The Cytoplasmic portion of the chain corresponds to 281-299 (WRTKKLKHTFLLILCQIRC).

It belongs to the G-protein coupled receptor T2R family.

The protein localises to the membrane. In terms of biological role, receptor that may play a role in the perception of bitterness and is gustducin-linked. May play a role in sensing the chemical composition of the gastrointestinal content. The activity of this receptor may stimulate alpha gustducin, mediate PLC-beta-2 activation and lead to the gating of TRPM5. This chain is Taste receptor type 2 member 50 (TAS2R50), found in Pan paniscus (Pygmy chimpanzee).